The sequence spans 165 residues: Large ribosomal subunit protein uL11A (165 aa).

The residue at position 67 (Arg-67) is an N5-methylarginine.

It belongs to the universal ribosomal protein uL11 family. In terms of assembly, component of the large ribosomal subunit (LSU). Mature yeast ribosomes consist of a small (40S) and a large (60S) subunit. The 40S small subunit contains 1 molecule of ribosomal RNA (18S rRNA) and at least 33 different proteins. The large 60S subunit contains 3 rRNA molecules (25S, 5.8S and 5S rRNA) and at least 46 different proteins.

The protein localises to the cytoplasm. Its subcellular location is the nucleus. The protein resides in the nucleolus. In terms of biological role, this protein binds directly to 26S ribosomal RNA. Functionally, component of the ribosome, a large ribonucleoprotein complex responsible for the synthesis of proteins in the cell. The small ribosomal subunit (SSU) binds messenger RNAs (mRNAs) and translates the encoded message by selecting cognate aminoacyl-transfer RNA (tRNA) molecules. The large subunit (LSU) contains the ribosomal catalytic site termed the peptidyl transferase center (PTC), which catalyzes the formation of peptide bonds, thereby polymerizing the amino acids delivered by tRNAs into a polypeptide chain. The nascent polypeptides leave the ribosome through a tunnel in the LSU and interact with protein factors that function in enzymatic processing, targeting, and the membrane insertion of nascent chains at the exit of the ribosomal tunnel. This Schizosaccharomyces pombe (strain 972 / ATCC 24843) (Fission yeast) protein is Large ribosomal subunit protein uL11A (rpl1201).